The primary structure comprises 322 residues: F-actin-capping protein subunit beta (322 aa).

Belongs to the F-actin-capping protein beta subunit family. In terms of assembly, component of the F-actin capping complex, composed of a heterodimer of an alpha and a beta subunit.

The protein localises to the cytoplasm. It is found in the cytoskeleton. Its subcellular location is the actin patch. Its function is as follows. F-actin-capping proteins bind in a Ca(2+)-independent manner to the fast growing ends of actin filaments (barbed end) thereby blocking the exchange of subunits at these ends. Unlike other capping proteins (such as gelsolin and severin), these proteins do not sever actin filaments. The polypeptide is F-actin-capping protein subunit beta (cap2) (Aspergillus fumigatus (strain ATCC MYA-4609 / CBS 101355 / FGSC A1100 / Af293) (Neosartorya fumigata)).